The following is a 450-amino-acid chain: MASLNLGFSGARKKAAARIRAVERRNLITVCRFSVKTLIDRSCFETIDDTSAEFINFVSILEHILSHRLKGQVSWFGYESPRSFWDFIRMACSKVPHSCIHSIENMENVRSSRAKGRAWIRVALMEKRLSEYISAALRDFKTTRRFYEEGALLLGEEAGLLADTLIGLNAIDFSFCLKGEGLDEDCPVVIDYTPYLKFTQTSDSISSDEEEMRTLGSSGSEAGTPESHMAASLMADQSSWFSKSKRLEQKYRVVLEQRGYLEELVRLREAQLSESVSQNKALLQRLTDTEISHKLEKEQLEIIILELQDQLTVLKNHDLRSRQELTSHLTNQWPSPGALDGNAVALDTLLYRKRTGPWEEKSFPSLEQLSADMSLSQTSLDPVQLNTHSLDSKAGLAHWHREGKEDTPSLRGLCGSLTSMASYKSLASLKSSEYLASPTTDMTSPGLTPS.

An RUN domain is found at 48–180; sequence DDTSAEFINF…IDFSFCLKGE (133 aa). The tract at residues 203-225 is disordered; sequence DSISSDEEEMRTLGSSGSEAGTP. Positions 291–317 form a coiled coil; it reads ISHKLEKEQLEIIILELQDQLTVLKNH.

The protein belongs to the RUNDC3 family.

This chain is RUN domain-containing protein 3B (rundc3b), found in Danio rerio (Zebrafish).